The following is a 491-amino-acid chain: Lysine--tRNA ligase (491 aa).

Residues glutamate 400 and glutamate 407 each contribute to the Mg(2+) site.

The protein belongs to the class-II aminoacyl-tRNA synthetase family. As to quaternary structure, homodimer. It depends on Mg(2+) as a cofactor.

The protein resides in the cytoplasm. The enzyme catalyses tRNA(Lys) + L-lysine + ATP = L-lysyl-tRNA(Lys) + AMP + diphosphate. This Mesomycoplasma hyopneumoniae (strain J / ATCC 25934 / NCTC 10110) (Mycoplasma hyopneumoniae) protein is Lysine--tRNA ligase.